Reading from the N-terminus, the 517-residue chain is L-amino-acid oxidase (517 aa).

Positions 1-18 (MNVFFMFSLLFLAALGSC) are cleaved as a signal peptide. Cysteines 29 and 192 form a disulfide. FAD contacts are provided by residues 62 to 63 (MA), 82 to 83 (EA), R90, and 106 to 109 (GPMR). Residue R109 coordinates substrate. N191 carries N-linked (GlcNAc...) asparagine glycosylation. Residue V280 participates in FAD binding. A disulfide bond links C350 and C431. Substrate is bound at residue Y391. FAD is bound by residues E476 and 483–488 (GWLDST). 483-484 (GW) contributes to the substrate binding site.

Belongs to the flavin monoamine oxidase family. FIG1 subfamily. In terms of assembly, homodimer; non-covalently linked. It depends on FAD as a cofactor. N-glycosylated. As to expression, expressed by the venom gland.

The protein localises to the secreted. The catalysed reaction is an L-alpha-amino acid + O2 + H2O = a 2-oxocarboxylate + H2O2 + NH4(+). Catalyzes an oxidative deamination of predominantly hydrophobic and aromatic L-amino acids, thus producing hydrogen peroxide that may contribute to the diverse toxic effects of this enzyme. Exhibits diverse biological activities, such as hemorrhage, hemolysis, edema, apoptosis of vascular endothelial cells or tumor cell lines, antiparasitic activities, as well as regulation of platelet aggregation. Effects of snake L-amino oxidases on platelets are controversial, since they either induce aggregation or inhibit agonist-induced aggregation. These different effects are probably due to different experimental conditions. This protein has antibacterial activities. The chain is L-amino-acid oxidase from Pseudechis australis (Mulga snake).